We begin with the raw amino-acid sequence, 138 residues long: Ostreolysin A6 (138 aa).

The protein belongs to the aegerolysin family. As to quaternary structure, monomer.

Has hemolytic activity against bovine erythrocytes at nanomolar concentrations in vitro. Promotes active pleurotolysin B (PlyB)-dependent permeabilization of membranes rich in cholesterol and sphingomyelin. May play an important role in the initial phase of fungal fruiting. This Pleurotus ostreatus (Oyster mushroom) protein is Ostreolysin A6 (OlyA6).